The chain runs to 502 residues: Beta-glucosidase 7 (502 aa).

The N-terminal stretch at 1–22 is a signal peptide; the sequence is MKPFSQFFVFVVTVSATSYIDA. Residues Q42, H140, and 185-186 contribute to the a beta-D-glucoside site; that span reads NE. The active-site Proton donor is the E186. N-linked (GlcNAc...) asparagine glycosylation is present at N208. A beta-D-glucoside is bound at residue Y325. N-linked (GlcNAc...) asparagine glycosylation occurs at N359. E392 contacts a beta-D-glucoside. The active-site Nucleophile is the E392. N-linked (GlcNAc...) asparagine glycosylation is present at N425. A beta-D-glucoside contacts are provided by W435 and Y451. Residues N457 and N479 are each glycosylated (N-linked (GlcNAc...) asparagine).

It belongs to the glycosyl hydrolase 1 family.

It carries out the reaction Hydrolysis of terminal, non-reducing beta-D-glucosyl residues with release of beta-D-glucose.. The protein is Beta-glucosidase 7 of Arabidopsis thaliana (Mouse-ear cress).